A 368-amino-acid polypeptide reads, in one-letter code: MRAEIENYVKKIEQSLELLWRSLDVESSTERLNELEELTSDPSLWNDQANAQTLLREKSNLEEKLNAFNKLKSNLKDTLELEEMAEAENDLETLSQIEQDLKNLSVIAAKFETECLFSGEADGNNCFLEINAGAGGTESHDWVSIMMRMYLRFAERLGFKTEIINMINGEEAGIKSCTIRIIGKRAYGWFKTEAGVHRLVRISPFNAAGKRMTSFASSWVYPEIDDNIAITIEDKDLRIDTFRASGAGGQHVNTTDSAVRITHIPTNTVTQCQSDRSQHKNKAQAMKMLQAKLYELEMQKRTDSVNEQNAAKTDNSWGHQIRSYVLQPYQMVKDLRTDYETSDTKGVLDGDLEDFVSASLAMNAGGRR.

The residue at position 250 (Gln250) is an N5-methylglutamine.

It belongs to the prokaryotic/mitochondrial release factor family. Post-translationally, methylated by PrmC. Methylation increases the termination efficiency of RF2.

The protein resides in the cytoplasm. Its function is as follows. Peptide chain release factor 2 directs the termination of translation in response to the peptide chain termination codons UGA and UAA. This Rickettsia felis (strain ATCC VR-1525 / URRWXCal2) (Rickettsia azadi) protein is Peptide chain release factor 2.